The sequence spans 130 residues: Granulin (130 aa).

The signal sequence occupies residues 1 to 26; the sequence is MNYSKIFIFGIISLILMALFSSTVES. Intrachain disulfides connect cysteine 67/cysteine 79 and cysteine 73/cysteine 89.

The protein belongs to the granulin family. Granulins are disulfide bridged.

It localises to the secreted. This chain is Granulin (grn), found in Dictyostelium discoideum (Social amoeba).